We begin with the raw amino-acid sequence, 599 residues long: Aspartate--tRNA(Asp/Asn) ligase (599 aa).

An L-aspartate-binding site is contributed by E172. The segment at 196-199 (QLFK) is aspartate. R218 is a binding site for L-aspartate. ATP is bound by residues 218 to 220 (RDE) and Q227. Residue H451 coordinates L-aspartate. ATP is bound at residue E485. R492 serves as a coordination point for L-aspartate. 537–540 (GLDR) is an ATP binding site.

This sequence belongs to the class-II aminoacyl-tRNA synthetase family. Type 1 subfamily. As to quaternary structure, homodimer.

The protein resides in the cytoplasm. It carries out the reaction tRNA(Asx) + L-aspartate + ATP = L-aspartyl-tRNA(Asx) + AMP + diphosphate. In terms of biological role, aspartyl-tRNA synthetase with relaxed tRNA specificity since it is able to aspartylate not only its cognate tRNA(Asp) but also tRNA(Asn). Reaction proceeds in two steps: L-aspartate is first activated by ATP to form Asp-AMP and then transferred to the acceptor end of tRNA(Asp/Asn). The polypeptide is Aspartate--tRNA(Asp/Asn) ligase (Dechloromonas aromatica (strain RCB)).